The sequence spans 180 residues: ATP-dependent protease subunit HslV (180 aa).

The active site involves Thr5. 3 residues coordinate Na(+): Gly165, Cys168, and Thr171.

The protein belongs to the peptidase T1B family. HslV subfamily. As to quaternary structure, a double ring-shaped homohexamer of HslV is capped on each side by a ring-shaped HslU homohexamer. The assembly of the HslU/HslV complex is dependent on binding of ATP.

It localises to the cytoplasm. The enzyme catalyses ATP-dependent cleavage of peptide bonds with broad specificity.. Its activity is regulated as follows. Allosterically activated by HslU binding. Protease subunit of a proteasome-like degradation complex believed to be a general protein degrading machinery. The chain is ATP-dependent protease subunit HslV from Helicobacter pylori (strain G27).